The sequence spans 184 residues: Regulatory protein RecX (184 aa).

Residues 1 to 21 (MTLFPLPSTSDPAEADESTKR) are disordered.

This sequence belongs to the RecX family.

Its subcellular location is the cytoplasm. Functionally, modulates RecA activity. This chain is Regulatory protein RecX, found in Mycolicibacterium vanbaalenii (strain DSM 7251 / JCM 13017 / BCRC 16820 / KCTC 9966 / NRRL B-24157 / PYR-1) (Mycobacterium vanbaalenii).